A 322-amino-acid chain; its full sequence is Deoxycytidylate deaminase (322 aa).

The region spanning 173 to 311 is the CMP/dCMP-type deaminase domain; that stretch reads SWDSYFMEMA…SLLQAAGVQL (139 aa). Residue His-246 participates in Zn(2+) binding. Glu-248 functions as the Proton donor in the catalytic mechanism. Residues Cys-273 and Cys-276 each contribute to the Zn(2+) site.

It belongs to the cytidine and deoxycytidylate deaminase family. Zn(2+) is required as a cofactor.

It is found in the cytoplasm. The protein resides in the nucleus. The enzyme catalyses dCMP + H2O + H(+) = dUMP + NH4(+). Functionally, supplies the nucleotide substrate for thymidylate synthetase. In Schizosaccharomyces pombe (strain 972 / ATCC 24843) (Fission yeast), this protein is Deoxycytidylate deaminase.